The primary structure comprises 88 residues: Synaptonemal complex central element protein 3 (88 aa).

The stretch at 7-75 (EERNYDNMLK…FVNCKEEMEK (69 aa)) forms a coiled coil.

As to quaternary structure, homodimer. Can form higher-order homooligomers. Interacts with SYCP1 (via tetrameric core); the interaction remodels SYCP1 homotetramers to 2:1 heterotrimers with SYCE3. SYCP1/SYCE3 heterotrimers form lattice assemblies as part of the mature synaptonemal complex via both lateral and head-to-head interactions. Interacts with the SYCE1-SIX6OS1 complex; the interaction recruits the SYCE1-SIX6OS1 complex to the central element of the synaptonemal complex. Interacts with the SYCE2-TEX12 complex; the interaction promotes fibrous assembly of SYCE2-TEX12 as part of the synaptonemal complex central element. Interacts with SYCE1. Interacts with SYCE2. Interacts with proteasome subunit PSMA8; to participate in meiosis progression during spermatogenesis. Interacts with SPO16.

Its subcellular location is the nucleus. It is found in the chromosome. Its function is as follows. Major component of the transverse central element of synaptonemal complexes (SCS), formed between homologous chromosomes during meiotic prophase. Required for the assembly of the central element of the synaptonemal complex during meiosis, via remodeling of SYCP1 lattice structures and promoting recruitment of SYCE2-TEX12 and SYCE1-SIX60S1 complexes. Required for chromosome loading of the central element-specific SCS proteins, and for initiating synapsis between homologous chromosomes. Chromosome loading appears to require SYCP1. Required for fertility and normal testis development. In Homo sapiens (Human), this protein is Synaptonemal complex central element protein 3.